The primary structure comprises 293 residues: Phosphatidylglycerol--prolipoprotein diacylglyceryl transferase (293 aa).

The next 4 helical transmembrane spans lie at 4–24 (ILAF…LFIF), 45–65 (FELR…YFVA), 81–101 (ELIF…YVLF), and 115–135 (IWEG…TGFL). Arginine 165 lines the a 1,2-diacyl-sn-glycero-3-phospho-(1'-sn-glycerol) pocket. 3 helical membrane-spanning segments follow: residues 204–224 (PTFL…SVYF), 231–249 (HGEV…RIVI), and 262–282 (IKAA…GFLI).

Belongs to the Lgt family.

It localises to the cell inner membrane. The catalysed reaction is L-cysteinyl-[prolipoprotein] + a 1,2-diacyl-sn-glycero-3-phospho-(1'-sn-glycerol) = an S-1,2-diacyl-sn-glyceryl-L-cysteinyl-[prolipoprotein] + sn-glycerol 1-phosphate + H(+). It functions in the pathway protein modification; lipoprotein biosynthesis (diacylglyceryl transfer). Its function is as follows. Catalyzes the transfer of the diacylglyceryl group from phosphatidylglycerol to the sulfhydryl group of the N-terminal cysteine of a prolipoprotein, the first step in the formation of mature lipoproteins. The protein is Phosphatidylglycerol--prolipoprotein diacylglyceryl transferase of Thermotoga petrophila (strain ATCC BAA-488 / DSM 13995 / JCM 10881 / RKU-1).